The primary structure comprises 154 residues: 6,7-dimethyl-8-ribityllumazine synthase (154 aa).

5-amino-6-(D-ribitylamino)uracil-binding positions include tryptophan 22, 56-58 (AWE), and 80-82 (CVI). A (2S)-2-hydroxy-3-oxobutyl phosphate-binding site is contributed by 85 to 86 (DT). Histidine 88 acts as the Proton donor in catalysis. A 5-amino-6-(D-ribitylamino)uracil-binding site is contributed by asparagine 113. Arginine 127 is a binding site for (2S)-2-hydroxy-3-oxobutyl phosphate.

Belongs to the DMRL synthase family. In terms of assembly, forms an icosahedral capsid composed of 60 subunits, arranged as a dodecamer of pentamers.

It catalyses the reaction (2S)-2-hydroxy-3-oxobutyl phosphate + 5-amino-6-(D-ribitylamino)uracil = 6,7-dimethyl-8-(1-D-ribityl)lumazine + phosphate + 2 H2O + H(+). The protein operates within cofactor biosynthesis; riboflavin biosynthesis; riboflavin from 2-hydroxy-3-oxobutyl phosphate and 5-amino-6-(D-ribitylamino)uracil: step 1/2. Its function is as follows. Catalyzes the formation of 6,7-dimethyl-8-ribityllumazine by condensation of 5-amino-6-(D-ribitylamino)uracil with 3,4-dihydroxy-2-butanone 4-phosphate. This is the penultimate step in the biosynthesis of riboflavin. The chain is 6,7-dimethyl-8-ribityllumazine synthase from Xanthomonas campestris pv. campestris (strain 8004).